The sequence spans 323 residues: Sphingolipid delta(4)-desaturase DES1 (323 aa).

The N-myristoyl glycine moiety is linked to residue Gly2. The next 2 helical transmembrane spans lie at 41–61 (HNLI…FYLV) and 68–88 (WVIF…TLAI). Positions 89–93 (HEISH) match the Histidine box-1 motif. The helical transmembrane segment at 104 to 124 (WNRWFGMFANLSLGVPYSISF) threads the bilayer. Residues 128–132 (HMDHH) carry the Histidine box-2 motif. 3 helical membrane-spanning segments follow: residues 152–172 (FFCT…FYAF), 184–204 (YLEI…YYVF), and 209–229 (LVYM…SGHF). Residues 259 to 263 (HNEHH) carry the Histidine box-3 motif. A Phosphoserine modification is found at Ser307.

Belongs to the fatty acid desaturase type 1 family. DEGS subfamily. In terms of assembly, interacts with RLBP1; the interaction increases synthesis of chromophore-precursors by DEGS1. In terms of processing, myristoylation can target the enzyme to the mitochondria leading to an increase in ceramide levels. As to expression, detected in testis. Detected in pachytene spermatocytes and round spermatids. Expressed in retina and retinal pigment epithelium by Mueller cells (at protein level).

It is found in the mitochondrion membrane. The protein localises to the endoplasmic reticulum membrane. It catalyses the reaction an N-acylsphinganine + 2 Fe(II)-[cytochrome b5] + O2 + 2 H(+) = an N-acylsphing-4-enine + 2 Fe(III)-[cytochrome b5] + 2 H2O. The catalysed reaction is all-trans-retinol = 11-cis-retinol. The enzyme catalyses all-trans-retinol = 9-cis-retinol. It carries out the reaction all-trans-retinol = 13-cis-retinol. It catalyses the reaction 11-cis-retinol = 13-cis-retinol. The catalysed reaction is 11-cis-retinol = 9-cis-retinol. Functionally, has sphingolipid-delta-4-desaturase activity. Converts D-erythro-sphinganine to D-erythro-sphingosine (E-sphing-4-enine). Catalyzes the equilibrium isomerization of retinols. The polypeptide is Sphingolipid delta(4)-desaturase DES1 (Mus musculus (Mouse)).